We begin with the raw amino-acid sequence, 612 residues long: DEAD-box ATP-dependent RNA helicase 11 (612 aa).

Disordered regions lie at residues 1–70 and 83–104; these read MSAS…SGGG and GAGGGGGGGGGWNNRSGGWDRR. Serine 2 is modified (N-acetylserine). 2 stretches are compositionally biased toward gly residues: residues 61–70 and 83–94; these read SGGGGASGGG and GAGGGGGGGGGW. Residues 151-179 carry the Q motif motif; sequence NTFADIDLGDALNLNIRRCKYVRPTPVQR. In terms of domain architecture, Helicase ATP-binding spans 182–366; that stretch reads IPILLAERDL…ADFMSNYIFL (185 aa). 195-202 serves as a coordination point for ATP; sequence AQTGSGKT. A DEAD box motif is present at residues 310-313; sequence DEAD. The Helicase C-terminal domain maps to 377-542; sequence LITQRVEFVQ…EVPEWLTRYA (166 aa). Residues 547 to 583 form a disordered region; that stretch reads FGGGKKRSGGRFGGRDFRREGSYSRGGGGGGGGGGSD. A compositionally biased stretch (basic and acidic residues) spans 559–568; it reads GGRDFRREGS. The span at 570-583 shows a compositional bias: gly residues; the sequence is SRGGGGGGGGGGSD.

The protein belongs to the DEAD box helicase family. DDX3/DED1 subfamily.

The enzyme catalyses ATP + H2O = ADP + phosphate + H(+). The polypeptide is DEAD-box ATP-dependent RNA helicase 11 (RH11) (Arabidopsis thaliana (Mouse-ear cress)).